Here is an 89-residue protein sequence, read N- to C-terminus: Putative regulatory protein MAE_11840 (89 aa).

Belongs to the RemA family.

The chain is Putative regulatory protein MAE_11840 from Microcystis aeruginosa (strain NIES-843 / IAM M-2473).